We begin with the raw amino-acid sequence, 371 residues long: Flagellar P-ring protein (371 aa).

A signal peptide spans 1-25; sequence MTMRVCKWLLTFALLFAATLTPAHS.

This sequence belongs to the FlgI family. The basal body constitutes a major portion of the flagellar organelle and consists of four rings (L,P,S, and M) mounted on a central rod.

The protein localises to the periplasm. The protein resides in the bacterial flagellum basal body. Assembles around the rod to form the L-ring and probably protects the motor/basal body from shearing forces during rotation. The chain is Flagellar P-ring protein from Sinorhizobium fredii (strain NBRC 101917 / NGR234).